The following is a 249-amino-acid chain: Secretion system apparatus lipoprotein SsaJ (249 aa).

Positions 1-18 (MKVHRIVFLTVLTFFLTA) are cleaved as a signal peptide. C19 carries N-palmitoyl cysteine lipidation. C19 carries S-diacylglycerol cysteine lipidation. A helical transmembrane segment spans residues 225–245 (LMLSLTGLLLGVGILIGYFCL).

Belongs to the YscJ lipoprotein family.

It localises to the cell outer membrane. In terms of biological role, component of Salmonella pathogenicity island 2 (SPI-2) type III secretion system, required for secretion of some type III-secreted effectors including the SpvB exotoxin. In Salmonella typhimurium (strain 14028s / SGSC 2262), this protein is Secretion system apparatus lipoprotein SsaJ (ssaJ).